Consider the following 1108-residue polypeptide: Isoleucine--tRNA ligase (1108 aa).

The short motif at 53–63 (PFANGLPHYGH) is the 'HIGH' region element. Residues 654-658 (KLSKR) carry the 'KMSKS' region motif. Residue Lys-657 participates in ATP binding.

The protein belongs to the class-I aminoacyl-tRNA synthetase family. IleS type 2 subfamily. In terms of assembly, monomer. The cofactor is Zn(2+).

The protein resides in the cytoplasm. The enzyme catalyses tRNA(Ile) + L-isoleucine + ATP = L-isoleucyl-tRNA(Ile) + AMP + diphosphate. Functionally, catalyzes the attachment of isoleucine to tRNA(Ile). As IleRS can inadvertently accommodate and process structurally similar amino acids such as valine, to avoid such errors it has two additional distinct tRNA(Ile)-dependent editing activities. One activity is designated as 'pretransfer' editing and involves the hydrolysis of activated Val-AMP. The other activity is designated 'posttransfer' editing and involves deacylation of mischarged Val-tRNA(Ile). This is Isoleucine--tRNA ligase from Rickettsia bellii (strain OSU 85-389).